A 427-amino-acid chain; its full sequence is Serine--tRNA ligase (427 aa).

Position 229–231 (229–231 (TAE)) interacts with L-serine. 260–262 (RSE) lines the ATP pocket. Glu-283 lines the L-serine pocket. Residue 347 to 350 (EISS) coordinates ATP. Ser-383 is a binding site for L-serine.

This sequence belongs to the class-II aminoacyl-tRNA synthetase family. Type-1 seryl-tRNA synthetase subfamily. Homodimer. The tRNA molecule binds across the dimer.

It is found in the cytoplasm. It carries out the reaction tRNA(Ser) + L-serine + ATP = L-seryl-tRNA(Ser) + AMP + diphosphate + H(+). It catalyses the reaction tRNA(Sec) + L-serine + ATP = L-seryl-tRNA(Sec) + AMP + diphosphate + H(+). It participates in aminoacyl-tRNA biosynthesis; selenocysteinyl-tRNA(Sec) biosynthesis; L-seryl-tRNA(Sec) from L-serine and tRNA(Sec): step 1/1. Catalyzes the attachment of serine to tRNA(Ser). Is also able to aminoacylate tRNA(Sec) with serine, to form the misacylated tRNA L-seryl-tRNA(Sec), which will be further converted into selenocysteinyl-tRNA(Sec). This is Serine--tRNA ligase from Oleidesulfovibrio alaskensis (strain ATCC BAA-1058 / DSM 17464 / G20) (Desulfovibrio alaskensis).